The primary structure comprises 46 residues: Delta-actitoxin-Avd1d (46 aa).

Cystine bridges form between Cys4–Cys44, Cys6–Cys34, and Cys27–Cys45.

It belongs to the sea anemone sodium channel inhibitory toxin family. Type I subfamily.

The protein resides in the secreted. It is found in the nematocyst. In terms of biological role, binds specifically to voltage-gated sodium channels (Nav), thereby delaying their inactivation during signal transduction. Thus it strongly stimulates mammalian cardiac muscle contraction. The protein is Delta-actitoxin-Avd1d of Anemonia sulcata (Mediterranean snakelocks sea anemone).